The sequence spans 430 residues: MTSVVVIGTQWGDEGKGKITDFLSQDAEVIARYQGGDNAGHTIVIDGKKFKLHLIPSGVFFPEKISVIGNGVVVNPKSLVKELEYLHTEGVSTENLRISDRAHVILPYHIKLDQLQEAAKGDNKIGTTNKGIGPAYMDKAARVGIRIADLLDKEIFASRLKTNLAEKNRLFSKMYESEELSFDEIFEEYYAYGQQIKQYVTDTSVILNDALDAGKRVLFEGAQGVMLDIDQGTYPFVTSSNPVAGGVTIGSGIGPSKINKVVGVCKAYTSRVGDGPFPTELFDEVGERIREVGHEYGTTTGRPRRVGWFDSVVMRHSRRVSGITNLSLNCIDVLSGLDTVKICVAYDLDGERIDYYPASLEQLKRCKPIYEELPGWEEDITGCRSLDELPENARNYVRRIGELVGIRISTFSVGPGREQTNILESVWSNI.

GTP is bound by residues 12-18 and 40-42; these read GDEGKGK and GHT. Residue D13 is the Proton acceptor of the active site. 2 residues coordinate Mg(2+): D13 and G40. Residues 13–16, 38–41, T128, R142, Q223, T238, and R302 contribute to the IMP site; these read DEGK and NAGH. H41 (proton donor) is an active-site residue. 298–304 contacts substrate; that stretch reads TTTGRPR. GTP contacts are provided by residues R304, 330 to 332, and 412 to 414; these read CID and SVG.

Belongs to the adenylosuccinate synthetase family. As to quaternary structure, homodimer. The cofactor is Mg(2+).

Its subcellular location is the cytoplasm. It catalyses the reaction IMP + L-aspartate + GTP = N(6)-(1,2-dicarboxyethyl)-AMP + GDP + phosphate + 2 H(+). The protein operates within purine metabolism; AMP biosynthesis via de novo pathway; AMP from IMP: step 1/2. Functionally, plays an important role in the de novo pathway of purine nucleotide biosynthesis. Catalyzes the first committed step in the biosynthesis of AMP from IMP. In Streptococcus thermophilus (strain CNRZ 1066), this protein is Adenylosuccinate synthetase.